Here is a 156-residue protein sequence, read N- to C-terminus: Ribonuclease pancreatic (156 aa).

Positions 1-28 (MALEKSLALLPLLVLVLLVLGWVQPSLG) are cleaved as a signal peptide. Substrate contacts are provided by K35 and R38. Catalysis depends on H40, which acts as the Proton acceptor. Intrachain disulfides connect C54/C112, C68/C123, C86/C138, and C93/C100. The N-linked (GlcNAc...) asparagine glycan is linked to N62. Residue 69 to 73 (KPVNT) participates in substrate binding. Residue N90 is glycosylated (N-linked (GlcNAc...) asparagine). Residues K94 and R113 each coordinate substrate. The active-site Proton donor is H147.

This sequence belongs to the pancreatic ribonuclease family. As to quaternary structure, monomer. Interacts with and forms tight 1:1 complexes with RNH1. Dimerization of two such complexes may occur. Interaction with RNH1 inhibits this protein.

It localises to the secreted. It catalyses the reaction an [RNA] containing cytidine + H2O = an [RNA]-3'-cytidine-3'-phosphate + a 5'-hydroxy-ribonucleotide-3'-[RNA].. It carries out the reaction an [RNA] containing uridine + H2O = an [RNA]-3'-uridine-3'-phosphate + a 5'-hydroxy-ribonucleotide-3'-[RNA].. Functionally, endonuclease that catalyzes the cleavage of RNA on the 3' side of pyrimidine nucleotides. Acts on single-stranded and double-stranded RNA. This is Ribonuclease pancreatic (RNASE1) from Lagothrix lagotricha (Brown woolly monkey).